Reading from the N-terminus, the 629-residue chain is Pentatricopeptide repeat-containing protein At1g62930, chloroplastic (629 aa).

Residues 1-41 constitute a chloroplast transit peptide; it reads MTSCVHLGIVASQSKKMSLAKRFAQLRKASPLFSLRGVYFS. PPR repeat units lie at residues 79–113, 114–148, 149–183, 184–218, 219–253, 254–288, 289–323, 324–358, 359–393, 394–428, 429–463, 464–498, 499–533, 534–568, and 569–603; these read SIVE…RISY, DLYS…GYEP, DIVT…EYQP, NTVT…GCQP, DLFT…KIEA, DVVI…GIRP, NVVT…KINP, NVVT…SIDP, DIFT…DCFP, NVVT…GLVG, NTVT…GVPP, DIIT…KMEP, DIYT…GVKP, NVII…GTLP, and NSGT…GFVG.

The protein belongs to the PPR family. P subfamily.

Its subcellular location is the plastid. It is found in the chloroplast. The chain is Pentatricopeptide repeat-containing protein At1g62930, chloroplastic from Arabidopsis thaliana (Mouse-ear cress).